We begin with the raw amino-acid sequence, 220 residues long: Deoxyribose-phosphate aldolase 2 (220 aa).

Asp89 (proton donor/acceptor) is an active-site residue. Lys151 (schiff-base intermediate with acetaldehyde) is an active-site residue. Lys180 (proton donor/acceptor) is an active-site residue.

Belongs to the DeoC/FbaB aldolase family. DeoC type 1 subfamily.

It localises to the cytoplasm. The enzyme catalyses 2-deoxy-D-ribose 5-phosphate = D-glyceraldehyde 3-phosphate + acetaldehyde. It participates in carbohydrate degradation; 2-deoxy-D-ribose 1-phosphate degradation; D-glyceraldehyde 3-phosphate and acetaldehyde from 2-deoxy-alpha-D-ribose 1-phosphate: step 2/2. Catalyzes a reversible aldol reaction between acetaldehyde and D-glyceraldehyde 3-phosphate to generate 2-deoxy-D-ribose 5-phosphate. The sequence is that of Deoxyribose-phosphate aldolase 2 from Staphylococcus aureus (strain MSSA476).